The chain runs to 281 residues: MSSYQNHKALAELTLGKPTAYCDHYDATLLQAVPRSMNREPLGLYPDNLPFHGADIWTLYELSWLNSNGLPQVAVGEISLNADSINLIESKSFKLYLNSFNQTIFADKESVRMTLQRDLAACAQGNVSVALYDLDEITGQPISNFNGECLDKQDIRIDSYEFNADYLQGAAGKDHVEESLVSHLLKSNCLITHQPDWGSVQIHYRGPQIDHEALLRYLVSFRHHNEFHEQCVERIFNDIMRFCQPETLTVYARYTRRGGLDINPWRSNTDFVPLTGRLARQ.

Residue 88-90 (IES) participates in substrate binding. 90–91 (SK) lines the NADPH pocket. C189 (thioimide intermediate) is an active-site residue. Catalysis depends on D196, which acts as the Proton donor. Residue 228–229 (HE) participates in substrate binding. Position 257 to 258 (257 to 258 (RG)) interacts with NADPH.

This sequence belongs to the GTP cyclohydrolase I family. QueF type 2 subfamily. In terms of assembly, homodimer.

Its subcellular location is the cytoplasm. It carries out the reaction 7-aminomethyl-7-carbaguanine + 2 NADP(+) = 7-cyano-7-deazaguanine + 2 NADPH + 3 H(+). It functions in the pathway tRNA modification; tRNA-queuosine biosynthesis. Functionally, catalyzes the NADPH-dependent reduction of 7-cyano-7-deazaguanine (preQ0) to 7-aminomethyl-7-deazaguanine (preQ1). The protein is NADPH-dependent 7-cyano-7-deazaguanine reductase of Yersinia pseudotuberculosis serotype O:1b (strain IP 31758).